Reading from the N-terminus, the 278-residue chain is Diaminopimelate epimerase (278 aa).

2 residues coordinate substrate: Asn13 and Asn66. Cys75 (proton donor) is an active-site residue. Residues 76–77, Asn162, Asn195, and 213–214 contribute to the substrate site; these read GN and ER. Catalysis depends on Cys222, which acts as the Proton acceptor. 223 to 224 serves as a coordination point for substrate; sequence GT.

The protein belongs to the diaminopimelate epimerase family. Homodimer.

The protein resides in the cytoplasm. It catalyses the reaction (2S,6S)-2,6-diaminopimelate = meso-2,6-diaminopimelate. The protein operates within amino-acid biosynthesis; L-lysine biosynthesis via DAP pathway; DL-2,6-diaminopimelate from LL-2,6-diaminopimelate: step 1/1. Catalyzes the stereoinversion of LL-2,6-diaminopimelate (L,L-DAP) to meso-diaminopimelate (meso-DAP), a precursor of L-lysine and an essential component of the bacterial peptidoglycan. This chain is Diaminopimelate epimerase, found in Trichodesmium erythraeum (strain IMS101).